The chain runs to 496 residues: Deoxyribodipyrimidine photo-lyase (496 aa).

Residues Gly-28–Met-160 enclose the Photolyase/cryptochrome alpha/beta domain. Residues Tyr-256, Leu-269–Ser-273, Glu-307–Ser-315, and Asp-415–Arg-417 contribute to the FAD site. Glu-307 is a binding site for DNA.

The protein belongs to the DNA photolyase class-2 family. It depends on FAD as a cofactor. As to expression, highly expressed in flowers. Expressed in roots and stems.

The protein localises to the nucleus. It catalyses the reaction cyclobutadipyrimidine (in DNA) = 2 pyrimidine residues (in DNA).. Functionally, involved in repair of UV radiation-induced DNA damage. Catalyzes the light-dependent monomerization (300-600 nm) of cyclobutylpyrimidine dimers (CPDs), which are formed between adjacent bases on the same DNA strand upon exposure to ultraviolet radiation. Required for plant survival in the presence of UV-B light. Not involved in the repair of (6-4) photoproducts. In Arabidopsis thaliana (Mouse-ear cress), this protein is Deoxyribodipyrimidine photo-lyase (PHR1).